A 227-amino-acid polypeptide reads, in one-letter code: MENTSTNGEPARAEKSIGRLHVLTDFHLQQDRSHAELARLAIRGGADTIQFRQKHGGIQNKLLEARKVATVCADASTPLLIDDHLDIAQATDADGVHLGQDDFPIDAARSVLGPSPIIGGTASKPHEAAEAYEQGADYIGFGPVFPTTSKRNPKSVKGPDGLADACEAVPIPVIAIGGITHDRVRSVLEAGAHGVAVLSAVDTARNPEQATARFRAAIDGVLREADS.

4-amino-2-methyl-5-(diphosphooxymethyl)pyrimidine is bound by residues 50 to 54 (QFRQK) and aspartate 82. Residues aspartate 83 and aspartate 102 each coordinate Mg(2+). A 4-amino-2-methyl-5-(diphosphooxymethyl)pyrimidine-binding site is contributed by threonine 121. 147–149 (TTS) contributes to the 2-[(2R,5Z)-2-carboxy-4-methylthiazol-5(2H)-ylidene]ethyl phosphate binding site. Lysine 150 is a binding site for 4-amino-2-methyl-5-(diphosphooxymethyl)pyrimidine. 2-[(2R,5Z)-2-carboxy-4-methylthiazol-5(2H)-ylidene]ethyl phosphate-binding positions include glycine 178 and 198-199 (LS).

It belongs to the thiamine-phosphate synthase family. Requires Mg(2+) as cofactor.

It catalyses the reaction 2-[(2R,5Z)-2-carboxy-4-methylthiazol-5(2H)-ylidene]ethyl phosphate + 4-amino-2-methyl-5-(diphosphooxymethyl)pyrimidine + 2 H(+) = thiamine phosphate + CO2 + diphosphate. The catalysed reaction is 2-(2-carboxy-4-methylthiazol-5-yl)ethyl phosphate + 4-amino-2-methyl-5-(diphosphooxymethyl)pyrimidine + 2 H(+) = thiamine phosphate + CO2 + diphosphate. It carries out the reaction 4-methyl-5-(2-phosphooxyethyl)-thiazole + 4-amino-2-methyl-5-(diphosphooxymethyl)pyrimidine + H(+) = thiamine phosphate + diphosphate. It participates in cofactor biosynthesis; thiamine diphosphate biosynthesis; thiamine phosphate from 4-amino-2-methyl-5-diphosphomethylpyrimidine and 4-methyl-5-(2-phosphoethyl)-thiazole: step 1/1. In terms of biological role, condenses 4-methyl-5-(beta-hydroxyethyl)thiazole monophosphate (THZ-P) and 2-methyl-4-amino-5-hydroxymethyl pyrimidine pyrophosphate (HMP-PP) to form thiamine monophosphate (TMP). This Salinibacter ruber (strain DSM 13855 / M31) protein is Thiamine-phosphate synthase.